The sequence spans 626 residues: Probable potassium transport system protein Kup (626 aa).

12 consecutive transmembrane segments (helical) span residues 13-33, 53-73, 102-122, 138-158, 169-189, 207-227, 248-268, 277-297, 338-358, 367-387, 399-419, and 421-441; these read VALM…SPLY, VLSI…VLLI, FFVV…MITP, HTLD…LFAI, LFGP…GWQV, FVFE…LALT, WFSM…ALLL, PFFL…ATVA, IYLP…VITF, AYGF…FAVL, WMLV…ANIF, and IHEG…LMMT.

The protein belongs to the HAK/KUP transporter (TC 2.A.72) family.

Its subcellular location is the cell inner membrane. The catalysed reaction is K(+)(in) + H(+)(in) = K(+)(out) + H(+)(out). Functionally, transport of potassium into the cell. Likely operates as a K(+):H(+) symporter. The sequence is that of Probable potassium transport system protein Kup from Bordetella avium (strain 197N).